The primary structure comprises 1463 residues: DNA polymerase III PolC-type (1463 aa).

Residues 425–581 (YVVFDVETTG…YDAEATGRLL (157 aa)) form the Exonuclease domain.

The protein belongs to the DNA polymerase type-C family. PolC subfamily.

The protein resides in the cytoplasm. It catalyses the reaction DNA(n) + a 2'-deoxyribonucleoside 5'-triphosphate = DNA(n+1) + diphosphate. Its function is as follows. Required for replicative DNA synthesis. This DNA polymerase also exhibits 3' to 5' exonuclease activity. The chain is DNA polymerase III PolC-type from Streptococcus pneumoniae serotype 4 (strain ATCC BAA-334 / TIGR4).